Here is a 115-residue protein sequence, read N- to C-terminus: NAD(P)H-quinone oxidoreductase subunit M (115 aa).

It belongs to the complex I NdhM subunit family. As to quaternary structure, NDH-1 can be composed of about 15 different subunits; different subcomplexes with different compositions have been identified which probably have different functions.

The protein resides in the cellular thylakoid membrane. It carries out the reaction a plastoquinone + NADH + (n+1) H(+)(in) = a plastoquinol + NAD(+) + n H(+)(out). It catalyses the reaction a plastoquinone + NADPH + (n+1) H(+)(in) = a plastoquinol + NADP(+) + n H(+)(out). NDH-1 shuttles electrons from an unknown electron donor, via FMN and iron-sulfur (Fe-S) centers, to quinones in the respiratory and/or the photosynthetic chain. The immediate electron acceptor for the enzyme in this species is believed to be plastoquinone. Couples the redox reaction to proton translocation, and thus conserves the redox energy in a proton gradient. Cyanobacterial NDH-1 also plays a role in inorganic carbon-concentration. The polypeptide is NAD(P)H-quinone oxidoreductase subunit M (Prochlorococcus marinus subsp. pastoris (strain CCMP1986 / NIES-2087 / MED4)).